A 353-amino-acid chain; its full sequence is Serine/threonine-protein kinase SRK2G (353 aa).

Positions 4-260 (YDVVKDLGAG…LKEIKNHPWY (257 aa)) constitute a Protein kinase domain. ATP-binding positions include 10-18 (LGAGNFGVA) and lysine 33. Catalysis depends on aspartate 123, which acts as the Proton acceptor. The disordered stretch occupies residues 299–353 (RNPAPSTSAVKSSGSGADEEEEEDVEAEVEEEEDDEDEYEKHVKEAQSCQESDKA). Residues 302 to 313 (APSTSAVKSSGS) are compositionally biased toward polar residues. Acidic residues predominate over residues 315-336 (ADEEEEEDVEAEVEEEEDDEDE). A compositionally biased stretch (basic and acidic residues) spans 337–353 (YEKHVKEAQSCQESDKA).

This sequence belongs to the protein kinase superfamily. Ser/Thr protein kinase family. As to expression, expressed in seedlings.

Its subcellular location is the nucleus. The enzyme catalyses L-seryl-[protein] + ATP = O-phospho-L-seryl-[protein] + ADP + H(+). It carries out the reaction L-threonyl-[protein] + ATP = O-phospho-L-threonyl-[protein] + ADP + H(+). In Arabidopsis thaliana (Mouse-ear cress), this protein is Serine/threonine-protein kinase SRK2G (SRK2G).